We begin with the raw amino-acid sequence, 414 residues long: MIVRINKSVAFGSVKAPRSKSWAIRLILLSAISDEETTICSIPDSDDTEAALRMIEVLGSKVIRQGNCIRVIPNLRQCGGYVNVGGSGTVMRLGVALASSCRNPVIIDGDETLKRRPIRELLESLRSLGVNVNGDSLPVAINGPVKGNYVEIRGDLTSQYISGLIMLGLVSGITIRVIGDLVSRQYVDLTRRIIEESGCSVGVSNDVITVNECIPRISLSNVPGDYALSGFYTALALATGGLVTVTGLPKPLGYGDDSLVNIFSNAGARSVFSNGDWSVEGGGELRGIVVDLKDSPDLAPVVASIAPFASGETVITGVRHLAFKESNRLETISDSLRAFGVNVNHGDDSLRISGSITHGALIKCPNDHRIAMMSGVVAAGSNGESIIHNAECVNKSNRLFWRDLVKLGVKLTIN.

Positions 20, 21, and 25 each coordinate 3-phosphoshikimate. Lys20 lines the phosphoenolpyruvate pocket. Residues Gly88 and Arg116 each contribute to the phosphoenolpyruvate site. Residues Thr157, Ser158, Gln159, Ser183, Asp297, and Lys324 each contribute to the 3-phosphoshikimate site. Residue Gln159 participates in phosphoenolpyruvate binding. The active-site Proton acceptor is the Asp297. Arg328, Arg369, and Lys395 together coordinate phosphoenolpyruvate.

This sequence belongs to the EPSP synthase family. In terms of assembly, monomer.

It localises to the cytoplasm. It catalyses the reaction 3-phosphoshikimate + phosphoenolpyruvate = 5-O-(1-carboxyvinyl)-3-phosphoshikimate + phosphate. It functions in the pathway metabolic intermediate biosynthesis; chorismate biosynthesis. In terms of biological role, catalyzes the transfer of the enolpyruvyl moiety of phosphoenolpyruvate (PEP) to the 5-hydroxyl of shikimate-3-phosphate (S3P) to produce enolpyruvyl shikimate-3-phosphate and inorganic phosphate. The polypeptide is 3-phosphoshikimate 1-carboxyvinyltransferase (Caldivirga maquilingensis (strain ATCC 700844 / DSM 13496 / JCM 10307 / IC-167)).